The sequence spans 1257 residues: Liprin-alpha-2 (1257 aa).

Disordered stretches follow at residues 1-29, 231-265, and 438-463; these read MMCE…DSDS, ASSE…DSTD, and EGQL…EHNK. The span at 16–26 shows a compositional bias: low complexity; that stretch reads SQRGSQSSGSD. 3 coiled-coil regions span residues 29–154, 185–541, and 643–695; these read SHFE…SLRM, KALD…SLIE, and HSDA…GLNL. Ser236 carries the phosphoserine modification. The residue at position 237 (Thr237) is a Phosphothreonine. Residues 238–256 are compositionally biased toward basic and acidic residues; the sequence is ESEHLEGMEPGQKVHEKRL. At Ser239 the chain carries Phosphoserine. 2 positions are modified to phosphoserine: Ser687 and Ser689. Composition is skewed to low complexity over residues 709–725 and 798–813; these read TASS…HSTP and SSLS…GLGS. Disordered regions lie at residues 709 to 738 and 790 to 834; these read TASS…EMDR and SSYH…KSSI. Phosphoserine occurs at positions 817 and 820. SAM domains are found at residues 898-964, 1020-1084, and 1108-1177; these read WDGP…MVSL, NHEW…LKRL, and WSND…LLAL. The stretch at 1081-1107 forms a coiled coil; that stretch reads LKRLNYDRKELERRREASQHEIKDVLV.

The protein belongs to the liprin family. Liprin-alpha subfamily. Forms homodimers and heterodimers with liprins-alpha and liprins-beta. Interacts with the second PTPase domain of PTPRD, PTPRF and PTPRS. Interacts with KIF1A; the interaction decreases in presence of calcium. In terms of tissue distribution, expressed only in brain.

Its subcellular location is the cytoplasm. The protein localises to the cell surface. It localises to the cell projection. The protein resides in the dendritic spine. Functionally, alters PTPRF cellular localization and induces PTPRF clustering. May regulate the disassembly of focal adhesions. May localize receptor-like tyrosine phosphatases type 2A at specific sites on the plasma membrane, possibly regulating their interaction with the extracellular environment and their association with substrates. In neuronal cells, is a scaffolding protein in the dendritic spines which acts as immobile postsynaptic post able to recruit KIF1A-driven dense core vesicles to dendritic spines. This is Liprin-alpha-2 (PPFIA2) from Homo sapiens (Human).